The following is a 334-amino-acid chain: Glucosyltransferase 3 (334 aa).

Residues Thr-16, Arg-179, and 249–254 (SHKSAT) contribute to the UDP site.

Belongs to the Gtf3 glucosyltransferase family. As to quaternary structure, homotetramer; a dimer of dimers.

It participates in protein modification; protein glycosylation. Functionally, required for polymorphic O-glycosylation of the serine-rich repeat protein in this bacteria. Catalyzes the second step in glycosylation by transferring glucose from UDP-glucose to the terminal GlcNAc moiety of the 3-O-(N-acetyl-alpha-D-glucosaminyl)-L-seryl-[protein] resulting from the first glycosylation step. Its function is as follows. Part of the accessory SecA2/SecY2 system specifically required to export GspB, a serine-rich repeat cell wall protein encoded upstream in the same operon. In Streptococcus gordonii, this protein is Glucosyltransferase 3.